Reading from the N-terminus, the 598-residue chain is Beta-hexosaminidase A (598 aa).

Residues 1-11 (MSFITSAHATA) form the signal peptide. Asp305 is a catalytic residue.

The protein belongs to the glycosyl hydrolase 3 family.

The catalysed reaction is Hydrolysis of terminal non-reducing N-acetyl-D-hexosamine residues in N-acetyl-beta-D-hexosaminides.. In terms of biological role, most active towards p-nitrophenyl-N-acetyl-beta-D-glucosaminide(PNP-beta-GlcNAc) and diacetylchitobiose. This is Beta-hexosaminidase A (cht60) from Pseudoalteromonas piscicida.